The primary structure comprises 693 residues: Serine/threonine-protein kinase Pkn1 (693 aa).

Positions 59 to 328 constitute a Protein kinase domain; sequence FRLVRRLGRG…QVALAEHVRV (270 aa). ATP-binding positions include 65–73 and Lys88; that span reads LGRGGMGAV. Asp180 (proton acceptor) is an active-site residue. The region spanning 393–491 is the PilZ domain; it reads LVEVPVQVVL…LKAAVDALLQ (99 aa). The stretch at 630–663 is one TPR repeat; it reads ARSHFQSGGALERDGQLSQALDQYERGLKLAPLE.

The protein belongs to the protein kinase superfamily. Ser/Thr protein kinase family. Post-translationally, autophosphorylated.

The catalysed reaction is L-seryl-[protein] + ATP = O-phospho-L-seryl-[protein] + ADP + H(+). It carries out the reaction L-threonyl-[protein] + ATP = O-phospho-L-threonyl-[protein] + ADP + H(+). With respect to regulation, may be regulated by calcium or a calmodulin-like protein. In terms of biological role, plays an essential role in proper timing of early development events. The protein is Serine/threonine-protein kinase Pkn1 (pkn1) of Myxococcus xanthus.